The chain runs to 599 residues: Elongation factor 4 (599 aa).

The region spanning 5 to 187 is the tr-type G domain; the sequence is KNIRNFSIIA…QLVERIPAPE (183 aa). GTP contacts are provided by residues 17–22 and 134–137; these read DHGKST and NKID.

The protein belongs to the TRAFAC class translation factor GTPase superfamily. Classic translation factor GTPase family. LepA subfamily.

It localises to the cell inner membrane. It catalyses the reaction GTP + H2O = GDP + phosphate + H(+). Functionally, required for accurate and efficient protein synthesis under certain stress conditions. May act as a fidelity factor of the translation reaction, by catalyzing a one-codon backward translocation of tRNAs on improperly translocated ribosomes. Back-translocation proceeds from a post-translocation (POST) complex to a pre-translocation (PRE) complex, thus giving elongation factor G a second chance to translocate the tRNAs correctly. Binds to ribosomes in a GTP-dependent manner. In Alcanivorax borkumensis (strain ATCC 700651 / DSM 11573 / NCIMB 13689 / SK2), this protein is Elongation factor 4.